The sequence spans 199 residues: N-(5'-phosphoribosyl)anthranilate isomerase (199 aa).

The protein belongs to the TrpF family.

The enzyme catalyses N-(5-phospho-beta-D-ribosyl)anthranilate = 1-(2-carboxyphenylamino)-1-deoxy-D-ribulose 5-phosphate. Its pathway is amino-acid biosynthesis; L-tryptophan biosynthesis; L-tryptophan from chorismate: step 3/5. The chain is N-(5'-phosphoribosyl)anthranilate isomerase from Streptococcus pneumoniae serotype 19F (strain G54).